Reading from the N-terminus, the 435-residue chain is Elongation factor 1-alpha (435 aa).

The region spanning 4-229 (KPHLNLIVIG…DMLEIPPKPV (226 aa)) is the tr-type G domain. The tract at residues 13–20 (GHVDHGKS) is G1. 13–20 (GHVDHGKS) is a binding site for GTP. S20 contacts Mg(2+). Positions 69-73 (GVTIN) are G2. The G3 stretch occupies residues 90 to 93 (DAPG). GTP is bound by residues 90-94 (DAPGH) and 152-155 (TKMD). Positions 152 to 155 (TKMD) are G4. A G5 region spans residues 193–195 (VSI).

Belongs to the TRAFAC class translation factor GTPase superfamily. Classic translation factor GTPase family. EF-Tu/EF-1A subfamily.

It localises to the cytoplasm. It carries out the reaction GTP + H2O = GDP + phosphate + H(+). In terms of biological role, GTP hydrolase that promotes the GTP-dependent binding of aminoacyl-tRNA to the A-site of ribosomes during protein biosynthesis. The chain is Elongation factor 1-alpha from Metallosphaera sedula (strain ATCC 51363 / DSM 5348 / JCM 9185 / NBRC 15509 / TH2).